Here is a 91-residue protein sequence, read N- to C-terminus: Alpha-elapitoxin-Oh2b (91 aa).

The signal sequence occupies residues 1–21 (MKTLLLTLVVMTIVCLDLGYT). 5 cysteine pairs are disulfide-bonded: cysteine 24/cysteine 41, cysteine 34/cysteine 62, cysteine 47/cysteine 51, cysteine 66/cysteine 77, and cysteine 78/cysteine 83.

This sequence belongs to the three-finger toxin family. Long-chain subfamily. Type II alpha-neurotoxin sub-subfamily. In terms of assembly, monomer. As to expression, expressed by the venom gland.

Its subcellular location is the secreted. Binds with high affinity to muscular (alpha-1/CHRNA1) and neuronal (alpha-7/CHRNA7) nicotinic acetylcholine receptor (nAChR) and inhibits acetylcholine from binding to the receptor, thereby impairing neuromuscular and neuronal transmission. Recombinant LNTX1 leads to a functional block of the muscle-type acetylcholine receptors. Has a cytotoxic activity. This neurotoxin is lethal. This is Alpha-elapitoxin-Oh2b from Ophiophagus hannah (King cobra).